Here is a 212-residue protein sequence, read N- to C-terminus: 7-carboxy-7-deazaguanine synthase (212 aa).

Residues 22-24 and Arg37 contribute to the substrate site; that span reads LQG. The region spanning 28–212 is the Radical SAM core domain; sequence NTGMPAVFVR…VQTHKWAGIE (185 aa). [4Fe-4S] cluster-binding residues include Cys41, Cys45, and Cys48. Thr50 is a Mg(2+) binding site. Thr78 provides a ligand contact to substrate. S-adenosyl-L-methionine contacts are provided by residues Gly80 and 122–124; that span reads SPK.

Belongs to the radical SAM superfamily. 7-carboxy-7-deazaguanine synthase family. In terms of assembly, homodimer. It depends on [4Fe-4S] cluster as a cofactor. The cofactor is S-adenosyl-L-methionine. Requires Mg(2+) as cofactor.

It carries out the reaction 6-carboxy-5,6,7,8-tetrahydropterin + H(+) = 7-carboxy-7-deazaguanine + NH4(+). Its pathway is purine metabolism; 7-cyano-7-deazaguanine biosynthesis. Catalyzes the complex heterocyclic radical-mediated conversion of 6-carboxy-5,6,7,8-tetrahydropterin (CPH4) to 7-carboxy-7-deazaguanine (CDG), a step common to the biosynthetic pathways of all 7-deazapurine-containing compounds. This Neisseria meningitidis serogroup B (strain ATCC BAA-335 / MC58) protein is 7-carboxy-7-deazaguanine synthase.